A 256-amino-acid polypeptide reads, in one-letter code: Pimeloyl-[acyl-carrier protein] methyl ester esterase (256 aa).

An AB hydrolase-1 domain is found at 15-242 (HLVLLHGWGL…AAHAPFISHP (228 aa)). Residues tryptophan 22, 82–83 (SL), and 143–147 (FLALQ) contribute to the substrate site. Serine 82 serves as the catalytic Nucleophile. Residues aspartate 207 and histidine 235 contribute to the active site. Histidine 235 provides a ligand contact to substrate.

The protein belongs to the AB hydrolase superfamily. Carboxylesterase BioH family. Monomer.

It localises to the cytoplasm. It carries out the reaction 6-carboxyhexanoyl-[ACP] methyl ester + H2O = 6-carboxyhexanoyl-[ACP] + methanol + H(+). It functions in the pathway cofactor biosynthesis; biotin biosynthesis. Functionally, the physiological role of BioH is to remove the methyl group introduced by BioC when the pimeloyl moiety is complete. It allows to synthesize pimeloyl-ACP via the fatty acid synthetic pathway through the hydrolysis of the ester bonds of pimeloyl-ACP esters. In Shigella boydii serotype 4 (strain Sb227), this protein is Pimeloyl-[acyl-carrier protein] methyl ester esterase.